The sequence spans 99 residues: Large ribosomal subunit protein bL28 (99 aa).

It belongs to the bacterial ribosomal protein bL28 family.

In Rhizobium etli (strain CIAT 652), this protein is Large ribosomal subunit protein bL28.